Consider the following 944-residue polypeptide: UvrABC system protein A (944 aa).

33-40 (GLSGSGKS) contacts ATP. The C4-type zinc finger occupies 252–279 (CPICGFSIGELEPRMFSFNSPFGACPTC). ABC transporter domains lie at 309–587 (WEPT…KKSL) and 607–935 (ITDR…QYLK). Position 639–646 (639–646 (GVSGSGKS)) interacts with ATP. The segment at 738–764 (CEACKGDGIIKIEMHFLPDVYVPCEVC) adopts a C4-type zinc-finger fold.

This sequence belongs to the ABC transporter superfamily. UvrA family. As to quaternary structure, forms a heterotetramer with UvrB during the search for lesions.

Its subcellular location is the cytoplasm. Functionally, the UvrABC repair system catalyzes the recognition and processing of DNA lesions. UvrA is an ATPase and a DNA-binding protein. A damage recognition complex composed of 2 UvrA and 2 UvrB subunits scans DNA for abnormalities. When the presence of a lesion has been verified by UvrB, the UvrA molecules dissociate. This chain is UvrABC system protein A, found in Staphylococcus epidermidis (strain ATCC 12228 / FDA PCI 1200).